The primary structure comprises 872 residues: Alanine--tRNA ligase (872 aa).

4 residues coordinate Zn(2+): His-567, His-571, Cys-669, and His-673.

This sequence belongs to the class-II aminoacyl-tRNA synthetase family. Zn(2+) is required as a cofactor.

The protein resides in the cytoplasm. The catalysed reaction is tRNA(Ala) + L-alanine + ATP = L-alanyl-tRNA(Ala) + AMP + diphosphate. Functionally, catalyzes the attachment of alanine to tRNA(Ala) in a two-step reaction: alanine is first activated by ATP to form Ala-AMP and then transferred to the acceptor end of tRNA(Ala). Also edits incorrectly charged Ser-tRNA(Ala) and Gly-tRNA(Ala) via its editing domain. In Streptococcus pyogenes serotype M12 (strain MGAS2096), this protein is Alanine--tRNA ligase.